The following is a 466-amino-acid chain: Citrate synthase, mitochondrial (466 aa).

The N-terminal 27 residues, 1 to 27, are a transit peptide targeting the mitochondrion; that stretch reads MALLTAAARLLGAKNSSCLVLAARHAS. An SIFI-degron motif is present at residues 2 to 21; the sequence is ALLTAAARLLGAKNSSCLVL. The residue at position 57 (lysine 57) is an N6-succinyllysine. Position 76 is an N6-acetyllysine; alternate (lysine 76). Lysine 76 bears the N6-succinyllysine; alternate mark. Residues lysine 103 and lysine 193 each carry the N6-succinyllysine modification. Position 226 is a phosphoserine (serine 226). Residue histidine 301 is part of the active site. An N6-acetyllysine; alternate mark is found at lysine 321 and lysine 327. 2 positions are modified to N6-succinyllysine; alternate: lysine 321 and lysine 327. Histidine 347 is an active-site residue. Arginine 356 lines the oxaloacetate pocket. Lysine 375 bears the N6-acetyllysine; alternate mark. Lysine 375 is modified (N6-succinyllysine; alternate). At lysine 382 the chain carries N6-acetyllysine. At lysine 393 the chain carries N6-acetyllysine; alternate. N6-succinyllysine; alternate is present on lysine 393. Lysine 395 bears the N6,N6,N6-trimethyllysine mark. The active site involves aspartate 402. 2 residues coordinate oxaloacetate: arginine 428 and arginine 448. Lysine 450 bears the N6-succinyllysine mark. Lysine 459 carries the N6-acetyllysine; alternate modification. Lysine 459 bears the N6-succinyllysine; alternate mark.

It belongs to the citrate synthase family. Homodimer. Post-translationally, methylated. Trimethylation at Lys-395 by CSKMT decreases citrate synthase activity. In response to mitochondrial stress, the precursor protein is ubiquitinated by the SIFI complex in the cytoplasm before mitochondrial import, leading to its degradation. Within the SIFI complex, UBR4 initiates ubiquitin chain that are further elongated or branched by KCMF1. As to expression, expressed in the head region and flagellum of epididymal sperm.

It localises to the mitochondrion matrix. It carries out the reaction oxaloacetate + acetyl-CoA + H2O = citrate + CoA + H(+). Its pathway is carbohydrate metabolism; tricarboxylic acid cycle; isocitrate from oxaloacetate: step 1/2. In terms of biological role, key enzyme of the Krebs tricarboxylic acid cycle which catalyzes the synthesis of citrate from acetyl coenzyme A and oxaloacetate. This chain is Citrate synthase, mitochondrial (Cs), found in Rattus norvegicus (Rat).